Consider the following 260-residue polypeptide: Phosphate import ATP-binding protein PstB (260 aa).

Residues 14–255 (IETENLNLFY…PKNTKTEEYI (242 aa)) form the ABC transporter domain. Residue 46–53 (GPSGCGKS) coordinates ATP.

The protein belongs to the ABC transporter superfamily. Phosphate importer (TC 3.A.1.7) family. As to quaternary structure, the complex is composed of two ATP-binding proteins (PstB), two transmembrane proteins (PstC and PstA) and a solute-binding protein (PstS).

Its subcellular location is the cell inner membrane. The enzyme catalyses phosphate(out) + ATP + H2O = ADP + 2 phosphate(in) + H(+). In terms of biological role, part of the ABC transporter complex PstSACB involved in phosphate import. Responsible for energy coupling to the transport system. The polypeptide is Phosphate import ATP-binding protein PstB (Borreliella afzelii (strain PKo) (Borrelia afzelii)).